The chain runs to 342 residues: MDVNEFDFDLPEELIAQTPLKTRTNSRLLVVDKKTKAISDRMFPDLIEALSPGDCLVLNDTKVMPARLLGEKVETKAVIELLLLKQLEGDCWETLVKPAKRVKIGTEVSFGDGKLTAICTAVQPQGGRIFEFRYSGVFYELLEELGTMPLPPYIKERLEDADRYQTVYAKQIGSAAAPTAGLHFSEQLLLEIEAKGVKIVYITLHVGLGTFRPVSASSVEDHQMHAEYYQVTEEAAHTLASARENGGNIIAVGTTSARTLETIYSDHGAFVAASGWTSIFIYPGYKYQAIDGLLTNFHLPKSTLVMLVSALIGKEALMDAYAHAIKERYRFFSFGDAMFIRP.

It belongs to the QueA family. Monomer.

The protein resides in the cytoplasm. The catalysed reaction is 7-aminomethyl-7-carbaguanosine(34) in tRNA + S-adenosyl-L-methionine = epoxyqueuosine(34) in tRNA + adenine + L-methionine + 2 H(+). It functions in the pathway tRNA modification; tRNA-queuosine biosynthesis. In terms of biological role, transfers and isomerizes the ribose moiety from AdoMet to the 7-aminomethyl group of 7-deazaguanine (preQ1-tRNA) to give epoxyqueuosine (oQ-tRNA). This chain is S-adenosylmethionine:tRNA ribosyltransferase-isomerase, found in Shouchella clausii (strain KSM-K16) (Alkalihalobacillus clausii).